A 486-amino-acid chain; its full sequence is Ribulose bisphosphate carboxylase large chain (486 aa).

Residues asparagine 126 and threonine 176 each coordinate substrate. Lysine 178 acts as the Proton acceptor in catalysis. Lysine 180 contributes to the substrate binding site. Mg(2+) contacts are provided by lysine 204, aspartate 206, and glutamate 207. The residue at position 204 (lysine 204) is an N6-carboxylysine. The Proton acceptor role is filled by histidine 296. 3 residues coordinate substrate: arginine 297, histidine 329, and serine 381.

Belongs to the RuBisCO large chain family. Type I subfamily. As to quaternary structure, heterohexadecamer of 8 large chains and 8 small chains. Mg(2+) is required as a cofactor.

The enzyme catalyses 2 (2R)-3-phosphoglycerate + 2 H(+) = D-ribulose 1,5-bisphosphate + CO2 + H2O. It catalyses the reaction D-ribulose 1,5-bisphosphate + O2 = 2-phosphoglycolate + (2R)-3-phosphoglycerate + 2 H(+). RuBisCO catalyzes two reactions: the carboxylation of D-ribulose 1,5-bisphosphate, the primary event in carbon dioxide fixation, as well as the oxidative fragmentation of the pentose substrate. Both reactions occur simultaneously and in competition at the same active site. This chain is Ribulose bisphosphate carboxylase large chain, found in Rhizobium meliloti (strain 1021) (Ensifer meliloti).